A 268-amino-acid chain; its full sequence is MAGAFFAGLASDVLGSGLGSLINAGAGAINQKVEFENNRKLQQASFQFSSTLQQASFQHDKEMLQAQIEATQKLQQDLMKVKQAVLLEGGFSTADAARGAINAPMTKALDWSGTRYWAPDARVTTYNAGHFSTPQSLGALTGRTNSRVSAPARSSPSALSNAPTATSLHSNQTVSTRLGSSAGSGTGVSSLSSAARTRSWVEDQNRNLSPFMRGALNTSFVTPPSSRSSSQSTVSTVPKEILDSWTGAFNTRRQPLFAHIRKRGESRV.

Positions 132–144 (STPQSLGALTGRT) are enriched in polar residues. Residues 132–199 (STPQSLGALT…SLSSAARTRS (68 aa)) form a disordered region. Over residues 145-163 (NSRVSAPARSSPSALSNAP) the composition is skewed to low complexity. Residues 164 to 178 (TATSLHSNQTVSTRL) are compositionally biased toward polar residues. A compositionally biased stretch (low complexity) spans 179 to 195 (GSSAGSGTGVSSLSSAA).

It belongs to the norovirus VP2 family. In terms of assembly, homooligomer. The portal-like structure consists in 12 copies of VP2. Interacts with capsid protein VP1.

Its subcellular location is the virion. The protein localises to the host cytoplasm. Minor structural protein that forms a portal-like structure at a unique three-fold axis of symmetry, following binding to the host receptor. The channel formed by VP2 may allow the delivery of the viral genome through the host endosomal membrane. The chain is Minor capsid protein VP2 from Lordsdale virus (strain GII/Human/United Kingdom/Lordsdale/1993) (Human enteric calicivirus).